We begin with the raw amino-acid sequence, 159 residues long: 2-C-methyl-D-erythritol 2,4-cyclodiphosphate synthase (159 aa).

A divalent metal cation-binding residues include Asp-10 and His-12. 4-CDP-2-C-methyl-D-erythritol 2-phosphate is bound by residues 10–12 (DVH) and 36–37 (HS). Position 44 (His-44) interacts with a divalent metal cation. Residues 58-60 (DIG), 63-67 (FPDTD), 102-108 (AQAPKMA), 134-137 (TTTE), Phe-141, and Arg-144 each bind 4-CDP-2-C-methyl-D-erythritol 2-phosphate.

Belongs to the IspF family. In terms of assembly, homotrimer. A divalent metal cation serves as cofactor.

It catalyses the reaction 4-CDP-2-C-methyl-D-erythritol 2-phosphate = 2-C-methyl-D-erythritol 2,4-cyclic diphosphate + CMP. Its pathway is isoprenoid biosynthesis; isopentenyl diphosphate biosynthesis via DXP pathway; isopentenyl diphosphate from 1-deoxy-D-xylulose 5-phosphate: step 4/6. Functionally, involved in the biosynthesis of isopentenyl diphosphate (IPP) and dimethylallyl diphosphate (DMAPP), two major building blocks of isoprenoid compounds. Catalyzes the conversion of 4-diphosphocytidyl-2-C-methyl-D-erythritol 2-phosphate (CDP-ME2P) to 2-C-methyl-D-erythritol 2,4-cyclodiphosphate (ME-CPP) with a corresponding release of cytidine 5-monophosphate (CMP). In Shewanella frigidimarina (strain NCIMB 400), this protein is 2-C-methyl-D-erythritol 2,4-cyclodiphosphate synthase.